We begin with the raw amino-acid sequence, 141 residues long: Galactose-6-phosphate isomerase subunit LacA 1 (141 aa).

Belongs to the LacAB/RpiB family. As to quaternary structure, heteromultimeric protein consisting of LacA and LacB.

It catalyses the reaction aldehydo-D-galactose 6-phosphate = keto-D-tagatose 6-phosphate. It participates in carbohydrate metabolism; D-galactose 6-phosphate degradation; D-tagatose 6-phosphate from D-galactose 6-phosphate: step 1/1. This is Galactose-6-phosphate isomerase subunit LacA 1 from Streptococcus agalactiae serotype III (strain NEM316).